Consider the following 244-residue polypeptide: Octanoyltransferase (244 aa).

Positions 1–21 (MDKKLHSVSPESGPNSNLDLT) are disordered. Positions 9 to 21 (SPESGPNSNLDLT) are enriched in polar residues. The BPL/LPL catalytic domain occupies 59–244 (PFSPQAVWLL…LNWEKINQSL (186 aa)). Residues 101 to 108 (RGGEVTHH), 168 to 170 (SIG), and 181 to 183 (GFS) each bind substrate. C199 functions as the Acyl-thioester intermediate in the catalytic mechanism.

Belongs to the LipB family.

The protein localises to the cytoplasm. It carries out the reaction octanoyl-[ACP] + L-lysyl-[protein] = N(6)-octanoyl-L-lysyl-[protein] + holo-[ACP] + H(+). It participates in protein modification; protein lipoylation via endogenous pathway; protein N(6)-(lipoyl)lysine from octanoyl-[acyl-carrier-protein]: step 1/2. Catalyzes the transfer of endogenously produced octanoic acid from octanoyl-acyl-carrier-protein onto the lipoyl domains of lipoate-dependent enzymes. Lipoyl-ACP can also act as a substrate although octanoyl-ACP is likely to be the physiological substrate. The chain is Octanoyltransferase from Prochlorococcus marinus (strain NATL1A).